A 569-amino-acid polypeptide reads, in one-letter code: Cationic amino acid transporter 9, chloroplastic (569 aa).

The N-terminal 41 residues, 1–41, are a transit peptide targeting the chloroplast; it reads MGGHEGFSNQRLSSATWFSHFRASALRSKSLPPPSSQTAVR. Helical transmembrane passes span 53–73, 81–101, 113–135, 155–175, 181–201, 215–235, 250–270, 284–304, 333–353, 406–428, 444–464, 467–487, 502–522, and 528–548; these read GLFDLILLGVGASIGAGVFVV, AGPGVTISFLLAGASCVLNAL, VVGGAYMYSYSAFNEITAFLVFV, YAVALLELFPALKGSIPLWMG, LGGLLSLNILAPILLALLTLV, VMTATKVVIVLVVICAGAFEI, AVLTGATVVFFSYVGFDAVAN, IGIMGSLLVCISLYIGVCLVL, ILISIGAVAGLTTTLLVGLYV, HILSVGTLTGYSVVAACVVALRL, WQEGVICLVIIACSGFGAGVF, FSASVIFILLSVGVAVVASAV, FSCPGVPIVPSVCIFFNIFLF, and EAWIRFVVVSVLATAVYALYG.

This sequence belongs to the amino acid-polyamine-organocation (APC) superfamily. Cationic amino acid transporter (CAT) (TC 2.A.3.3) family. In terms of tissue distribution, expressed in roots, stems, flowers, and leaves.

Its subcellular location is the plastid. The protein localises to the chloroplast membrane. Permease involved in the transport of the cationic amino acids. The sequence is that of Cationic amino acid transporter 9, chloroplastic (CAT9) from Arabidopsis thaliana (Mouse-ear cress).